We begin with the raw amino-acid sequence, 516 residues long: RxLR effector protein PITG_15127 (516 aa).

An N-terminal signal peptide occupies residues 1–22; sequence MRLYSGAILCTIATLLISVSTA. Positions 48-63 match the RxLR-dEER motif; sequence RFLRVSTQNTENGENR.

It belongs to the RxLR effector family.

It localises to the secreted. Its subcellular location is the host cell membrane. The protein resides in the host nucleus. The protein localises to the host cytoplasm. Functionally, effector that enhances P.infestans colonization of Nicotiana benthamiana leaves. The chain is RxLR effector protein PITG_15127 from Phytophthora infestans (strain T30-4) (Potato late blight agent).